We begin with the raw amino-acid sequence, 347 residues long: NADH-ubiquinone oxidoreductase chain 2 (347 aa).

10 helical membrane passes run 13–33, 59–79, 84–104, 111–131, 149–169, 178–198, 201–221, 240–260, 276–296, and 326–346; these read IILG…WIGF, YFLI…INLL, WAVS…ALAM, FHFW…LILL, IDPT…GWGG, IMAY…IYNP, TILN…LLII, IAII…LTGF, IALS…YTRL, and LSPL…MSAL.

This sequence belongs to the complex I subunit 2 family. In terms of assembly, core subunit of respiratory chain NADH dehydrogenase (Complex I) which is composed of 45 different subunits. Interacts with TMEM242.

The protein localises to the mitochondrion inner membrane. It carries out the reaction a ubiquinone + NADH + 5 H(+)(in) = a ubiquinol + NAD(+) + 4 H(+)(out). In terms of biological role, core subunit of the mitochondrial membrane respiratory chain NADH dehydrogenase (Complex I) that is believed to belong to the minimal assembly required for catalysis. Complex I functions in the transfer of electrons from NADH to the respiratory chain. The immediate electron acceptor for the enzyme is believed to be ubiquinone. The protein is NADH-ubiquinone oxidoreductase chain 2 of Chrotopterus auritus (Peters's woolly false vampire bat).